The following is a 655-amino-acid chain: Putative esterase (655 aa).

The chain crosses the membrane as a helical span at residues 9–29 (VLSLTLIYISISIGFSVYFYV). N-linked (GlcNAc...) asparagine; by host glycosylation is found at Asn-71, Asn-89, Asn-101, Asn-185, Asn-386, Asn-449, and Asn-512. The Charge relay system role is filled by His-515. N-linked (GlcNAc...) asparagine; by host glycans are attached at residues Asn-527 and Asn-597.

It belongs to the type-B carboxylesterase/lipase family.

It is found in the membrane. It catalyses the reaction a carboxylic ester + H2O = an alcohol + a carboxylate + H(+). This Noctuidae (owlet moths) protein is Putative esterase.